Consider the following 413-residue polypeptide: Ras association domain-containing protein 5 (413 aa).

Residues Met1–Pro105 form a disordered region. Basic and acidic residues predominate over residues Ala61–His74. The Phorbol-ester/DAG-type zinc-finger motif lies at Gly117 to Cys165. Residues Ser177 and Ser274 each carry the phosphoserine modification. The Ras-associating domain maps to Pro265–Thr359. The residue at position 347 (Thr347) is a Phosphothreonine. Residues Asp361–Ser408 form the SARAH domain.

In terms of assembly, interacts directly with activated HRAS; a RASSF5-STK4/MST1 complex probably associates with activated HRAS. Interacts with KRAS. Probably interacts with Ras-like GTPases RRAS, MRAS, RAP1B, RAP2A and RALA. Interacts with RRAS2. Can self-associate. Interacts with RSSF1 isoform A. The RSSF1 isoform A-RSSF5 heterodimer probably mediates the association of RSSF1 with HRAS. Isoform 2 interacts with activated RAP1A and ITGAL/LFA-1. Binds STK4/MST1, inhibiting STK4/MST1 autoactivation.

The protein localises to the cytoplasm. The protein resides in the cytoskeleton. Functionally, potential tumor suppressor. Seems to be involved in lymphocyte adhesion by linking RAP1A activation upon T-cell receptor or chemokine stimulation to integrin activation. Stimulates lymphocyte polarization and the patch-like distribution of ITGAL/LFA-1, resulting in an enhanced adhesion to ICAM1. Together with RAP1A may participate in regulation of microtubule growth. The association with activated RAP1A is required for directional movement of endothelial cells during wound healing. May be involved in regulation of Ras apoptotic function. The RASSF5-STK4/MST1 complex may mediate HRAS and KRAS induced apoptosis. The protein is Ras association domain-containing protein 5 (Rassf5) of Rattus norvegicus (Rat).